We begin with the raw amino-acid sequence, 956 residues long: DNA repair endonuclease UVH1 (956 aa).

The Nuclear localization signal signature appears at 256 to 272; the sequence is RRQLDPIWHTLGKRTKQ. Disordered stretches follow at residues 343 to 363, 516 to 593, and 697 to 718; these read HVKNKSGKKRNSKGETDSVEA, TTDM…RPSG, and SSTEFPASSTQNSLTRKAGGRK. Positions 697-711 are enriched in polar residues; that stretch reads SSTEFPASSTQNSLT. In terms of domain architecture, ERCC4 spans 725-805; it reads QVIVDMREFM…IPVLLIEFSQ (81 aa).

Belongs to the XPF family. In terms of assembly, heterodimer with ERCC1/RAD10. As to expression, isoform 1 and isoform 2 are widely expressed, predominantly in flowers, meristems and stems. Isoform 3 is detected at low levels.

The protein resides in the nucleus. Seems to be involved in nucleotide excision repair (NER) of damaged DNA (dark repair mechanism). Involved in repair of UV light, and probably oxidative damage. The UVH1/RAD1-ERCC1/RAD10 complex may act as an endonuclease making DNA incision 5' to the lesion site. In vitro, is implicated in double strand breaks (DSBs) repair and is required for homologous recombination in the presence of non-homologous overhangs. May mediate the induction of a DNA-damage sensitive cell-cycle checkpoint during the G2 phase. The chain is DNA repair endonuclease UVH1 (UVH1) from Arabidopsis thaliana (Mouse-ear cress).